The following is a 272-amino-acid chain: Putative imidazole glycerol phosphate synthase subunit hisF2 (272 aa).

The active site involves D133.

Belongs to the HisA/HisF family. In terms of assembly, heterodimer of HisH and HisF.

Its subcellular location is the cytoplasm. The enzyme catalyses 5-[(5-phospho-1-deoxy-D-ribulos-1-ylimino)methylamino]-1-(5-phospho-beta-D-ribosyl)imidazole-4-carboxamide + L-glutamine = D-erythro-1-(imidazol-4-yl)glycerol 3-phosphate + 5-amino-1-(5-phospho-beta-D-ribosyl)imidazole-4-carboxamide + L-glutamate + H(+). Its pathway is amino-acid biosynthesis; L-histidine biosynthesis; L-histidine from 5-phospho-alpha-D-ribose 1-diphosphate: step 5/9. Its function is as follows. IGPS catalyzes the conversion of PRFAR and glutamine to IGP, AICAR and glutamate. The HisF subunit catalyzes the cyclization activity that produces IGP and AICAR from PRFAR using the ammonia provided by the HisH subunit. In Vibrio vulnificus (strain YJ016), this protein is Putative imidazole glycerol phosphate synthase subunit hisF2 (hisF2).